The primary structure comprises 201 residues: Glycerol-3-phosphate acyltransferase (201 aa).

5 helical membrane passes run 9–29 (LTLI…FGLI), 60–80 (LAAA…LVAS), 86–106 (AAIG…WIGF), 116–136 (LGVL…VWIV), and 153–173 (IVVP…LFAI).

It belongs to the PlsY family. Probably interacts with PlsX.

It is found in the cell inner membrane. The catalysed reaction is an acyl phosphate + sn-glycerol 3-phosphate = a 1-acyl-sn-glycero-3-phosphate + phosphate. Its pathway is lipid metabolism; phospholipid metabolism. Catalyzes the transfer of an acyl group from acyl-phosphate (acyl-PO(4)) to glycerol-3-phosphate (G3P) to form lysophosphatidic acid (LPA). This enzyme utilizes acyl-phosphate as fatty acyl donor, but not acyl-CoA or acyl-ACP. The polypeptide is Glycerol-3-phosphate acyltransferase (Brucella anthropi (strain ATCC 49188 / DSM 6882 / CCUG 24695 / JCM 21032 / LMG 3331 / NBRC 15819 / NCTC 12168 / Alc 37) (Ochrobactrum anthropi)).